The following is a 160-amino-acid chain: Type IV major fimbrial protein FimA (160 aa).

Positions 1-7 (MKSLQKG) are cleaved as a propeptide — leader sequence. At Phe8 the chain carries N-methylphenylalanine. The chain crosses the membrane as a helical span at residues 8–28 (FTLIELMIVVAIIGILAAFAI). Cys63 and Cys106 form a disulfide bridge.

This sequence belongs to the N-Me-Phe pilin family. The pili are polar flexible filaments of about 5.4 nanometers diameter and 2.5 micrometers average length; they consist of only a single polypeptide chain arranged in a helical configuration of five subunits per turn in the assembled pilus.

The protein resides in the fimbrium. Its subcellular location is the membrane. In terms of biological role, major component of the type IV fimbriae that plays an essential role in twitching motility, natural transformation, and protease secretion. This chain is Type IV major fimbrial protein FimA (fimA), found in Dichelobacter nodosus (Bacteroides nodosus).